Reading from the N-terminus, the 198-residue chain is uncharacterized protein (198 aa).

The segment at 51 to 74 (EEPDNGDDRGSRRTTGQGRKWAAH) is disordered.

This is an uncharacterized protein from Homo sapiens (Human).